Reading from the N-terminus, the 247-residue chain is Cell division protein ZapD (247 aa).

Belongs to the ZapD family. In terms of assembly, interacts with FtsZ.

It is found in the cytoplasm. Its function is as follows. Cell division factor that enhances FtsZ-ring assembly. Directly interacts with FtsZ and promotes bundling of FtsZ protofilaments, with a reduction in FtsZ GTPase activity. This Erwinia tasmaniensis (strain DSM 17950 / CFBP 7177 / CIP 109463 / NCPPB 4357 / Et1/99) protein is Cell division protein ZapD.